The following is a 667-amino-acid chain: Protein angel homolog 1 (667 aa).

Phosphoserine is present on residues serine 77 and serine 105.

The protein belongs to the CCR4/nocturin family.

This chain is Protein angel homolog 1, found in Mus musculus (Mouse).